The sequence spans 140 residues: Nucleoside diphosphate kinase (140 aa).

Positions 9, 57, 85, 91, 102, and 112 each coordinate ATP. Histidine 115 acts as the Pros-phosphohistidine intermediate in catalysis.

This sequence belongs to the NDK family. As to quaternary structure, homotetramer. Mg(2+) is required as a cofactor.

The protein resides in the cytoplasm. It carries out the reaction a 2'-deoxyribonucleoside 5'-diphosphate + ATP = a 2'-deoxyribonucleoside 5'-triphosphate + ADP. The enzyme catalyses a ribonucleoside 5'-diphosphate + ATP = a ribonucleoside 5'-triphosphate + ADP. In terms of biological role, major role in the synthesis of nucleoside triphosphates other than ATP. The ATP gamma phosphate is transferred to the NDP beta phosphate via a ping-pong mechanism, using a phosphorylated active-site intermediate. The sequence is that of Nucleoside diphosphate kinase from Chlorobium chlorochromatii (strain CaD3).